The primary structure comprises 529 residues: Glucose-6-phosphate isomerase (529 aa).

Glu-323 acts as the Proton donor in catalysis. Residues His-352 and Lys-456 contribute to the active site.

Belongs to the GPI family.

It is found in the cytoplasm. The enzyme catalyses alpha-D-glucose 6-phosphate = beta-D-fructose 6-phosphate. Its pathway is carbohydrate biosynthesis; gluconeogenesis. The protein operates within carbohydrate degradation; glycolysis; D-glyceraldehyde 3-phosphate and glycerone phosphate from D-glucose: step 2/4. Its function is as follows. Catalyzes the reversible isomerization of glucose-6-phosphate to fructose-6-phosphate. The polypeptide is Glucose-6-phosphate isomerase (Geobacter sulfurreducens (strain ATCC 51573 / DSM 12127 / PCA)).